Consider the following 429-residue polypeptide: 3-phosphoshikimate 1-carboxyvinyltransferase (429 aa).

Residues Lys-23, Ser-24, and Arg-28 each contribute to the 3-phosphoshikimate site. Lys-23 lines the phosphoenolpyruvate pocket. Residues Gly-97 and Arg-125 each coordinate phosphoenolpyruvate. 3-phosphoshikimate contacts are provided by Ser-170, Ser-171, Gln-172, Ser-198, Asp-314, Asn-338, and Lys-342. Gln-172 is a binding site for phosphoenolpyruvate. Residue Asp-314 is the Proton acceptor of the active site. The phosphoenolpyruvate site is built by Arg-346, Arg-388, and Lys-413.

It belongs to the EPSP synthase family. Monomer.

It is found in the cytoplasm. It catalyses the reaction 3-phosphoshikimate + phosphoenolpyruvate = 5-O-(1-carboxyvinyl)-3-phosphoshikimate + phosphate. It functions in the pathway metabolic intermediate biosynthesis; chorismate biosynthesis; chorismate from D-erythrose 4-phosphate and phosphoenolpyruvate: step 6/7. Its function is as follows. Catalyzes the transfer of the enolpyruvyl moiety of phosphoenolpyruvate (PEP) to the 5-hydroxyl of shikimate-3-phosphate (S3P) to produce enolpyruvyl shikimate-3-phosphate and inorganic phosphate. The protein is 3-phosphoshikimate 1-carboxyvinyltransferase of Pectobacterium carotovorum subsp. carotovorum (strain PC1).